The chain runs to 124 residues: Small ribosomal subunit protein bS6 (124 aa).

It belongs to the bacterial ribosomal protein bS6 family.

In terms of biological role, binds together with bS18 to 16S ribosomal RNA. In Campylobacter lari (strain RM2100 / D67 / ATCC BAA-1060), this protein is Small ribosomal subunit protein bS6.